We begin with the raw amino-acid sequence, 248 residues long: UPF0280 protein Maeo_0343 (248 aa).

The protein belongs to the UPF0280 family.

The sequence is that of UPF0280 protein Maeo_0343 from Methanococcus aeolicus (strain ATCC BAA-1280 / DSM 17508 / OCM 812 / Nankai-3).